The chain runs to 352 residues: MDPISNDSSEITYDYSDGTPNPDMPADGVYIPKMEPGDIAALIIYLAVFLVGVTGNALVVWVTAFEAKRTVNAIWFLNLAVADLLSCLALPILFTSIVKHNHWPFGDQACIVLPSLILLNMYSSILLLATISADRFLLVFKPIWCQKFRRPGLAWMACGVTWVLALLLTIPSFVFRRIHKDPYSDSILCNIDYSKGPFFIEKAIAILRLMVGFVLPLLTLNICYTFLLIRTWSRKATRSTKTLKVVMAVVTCFFVFWLPYQVTGVILAWLPRSSSTFQSVERLNSLCVSLAYINCCVNPIIYVMAGQGFHGRLRRSLPSIIRNVLSEDSLGRDSKSFTRSTMDTSTQKSQAV.

The segment covering 1–11 (MDPISNDSSEI) has biased composition (polar residues). Residues 1-20 (MDPISNDSSEITYDYSDGTP) are disordered. Over 1 to 38 (MDPISNDSSEITYDYSDGTPNPDMPADGVYIPKMEPGD) the chain is Extracellular. N-linked (GlcNAc...) asparagine glycosylation occurs at N6. Y13 and Y15 each carry sulfotyrosine. Residues 39 to 65 (IAALIIYLAVFLVGVTGNALVVWVTAF) traverse the membrane as a helical segment. The Cytoplasmic segment spans residues 66–70 (EAKRT). The helical transmembrane segment at 71 to 94 (VNAIWFLNLAVADLLSCLALPILF) threads the bilayer. The Extracellular segment spans residues 95-111 (TSIVKHNHWPFGDQACI). C110 and C189 are oxidised to a cystine. A helical transmembrane segment spans residues 112-133 (VLPSLILLNMYSSILLLATISA). Residues 134 to 154 (DRFLLVFKPIWCQKFRRPGLA) are Cytoplasmic-facing. Residues 155 to 175 (WMACGVTWVLALLLTIPSFVF) form a helical membrane-spanning segment. The Extracellular segment spans residues 176-202 (RRIHKDPYSDSILCNIDYSKGPFFIEK). A helical transmembrane segment spans residues 203–228 (AIAILRLMVGFVLPLLTLNICYTFLL). Residues 229–244 (IRTWSRKATRSTKTLK) lie on the Cytoplasmic side of the membrane. The chain crosses the membrane as a helical span at residues 245–267 (VVMAVVTCFFVFWLPYQVTGVIL). The Extracellular portion of the chain corresponds to 268 to 284 (AWLPRSSSTFQSVERLN). A helical transmembrane segment spans residues 285 to 305 (SLCVSLAYINCCVNPIIYVMA). Topologically, residues 306-352 (GQGFHGRLRRSLPSIIRNVLSEDSLGRDSKSFTRSTMDTSTQKSQAV) are cytoplasmic. A phosphoserine mark is found at S316, S319, S326, S329, S334, S336, and S340. A disordered region spans residues 332-352 (RDSKSFTRSTMDTSTQKSQAV). Polar residues predominate over residues 337 to 352 (FTRSTMDTSTQKSQAV).

It belongs to the G-protein coupled receptor 1 family. As to quaternary structure, homodimer. May also form higher-order oligomers. Interacts (when phosphorylated) with ARRB1 and ARRB2; the interaction is associated with internalization of C5aR. In terms of processing, sulfation plays a critical role in the association of C5aR with C5a, but no significant role in the ability of the receptor to transduce a signal and mobilize calcium in response to a small peptide agonist. Phosphorylated on serine residues in response to C5a binding, resulting in internalization of the receptor and short-term desensitization to the ligand.

The protein resides in the cell membrane. Its subcellular location is the cytoplasmic vesicle. Its function is as follows. Receptor for the chemotactic and inflammatory peptide anaphylatoxin C5a. The ligand interacts with at least two sites on the receptor: a high-affinity site on the extracellular N-terminus, and a second site in the transmembrane region which activates downstream signaling events. Receptor activation stimulates chemotaxis, granule enzyme release, intracellular calcium release and superoxide anion production. The chain is C5a anaphylatoxin chemotactic receptor 1 (C5ar1) from Rattus norvegicus (Rat).